A 154-amino-acid chain; its full sequence is Ubiquitin-like protein 4A-A (154 aa).

The Ubiquitin-like domain maps to 1–76 (MILTVKPLQG…LNLVVRPAGE (76 aa)).

As to quaternary structure, component of the BAT3 complex.

The protein resides in the cytoplasm. Its subcellular location is the cytosol. Functionally, component of the BAT3 complex, a multiprotein complex involved in the post-translational delivery of tail-anchored (TA) membrane proteins to the endoplasmic reticulum membrane. TA membrane proteins, also named type II transmembrane proteins, contain a single C-terminal transmembrane region. The sequence is that of Ubiquitin-like protein 4A-A (ubl4aa) from Salmo salar (Atlantic salmon).